Consider the following 680-residue polypeptide: DNA ligase (680 aa).

NAD(+)-binding positions include 32–36 (DAVYD), 81–82 (SL), and Glu-115. Lys-117 (N6-AMP-lysine intermediate) is an active-site residue. Residues Arg-138, Glu-175, Lys-291, and Lys-315 each contribute to the NAD(+) site. Zn(2+) contacts are provided by Cys-409, Cys-412, Cys-427, and Cys-432. Residues 600–680 (ASEQHLKGLT…RLQAMLKDSP (81 aa)) form the BRCT domain.

The protein belongs to the NAD-dependent DNA ligase family. LigA subfamily. Requires Mg(2+) as cofactor. It depends on Mn(2+) as a cofactor.

It catalyses the reaction NAD(+) + (deoxyribonucleotide)n-3'-hydroxyl + 5'-phospho-(deoxyribonucleotide)m = (deoxyribonucleotide)n+m + AMP + beta-nicotinamide D-nucleotide.. Its function is as follows. DNA ligase that catalyzes the formation of phosphodiester linkages between 5'-phosphoryl and 3'-hydroxyl groups in double-stranded DNA using NAD as a coenzyme and as the energy source for the reaction. It is essential for DNA replication and repair of damaged DNA. This is DNA ligase from Synechococcus sp. (strain CC9902).